An 88-amino-acid polypeptide reads, in one-letter code: CLAVATA3/ESR (CLE)-related protein 42 (88 aa).

The N-terminal stretch at 1 to 24 is a signal peptide; the sequence is MRSPHITISLVFLFFLFLIIQTHQ. The disordered stretch occupies residues 69–88; that stretch reads KMIGANEHGVPSGPNPISNR. Hydroxyproline occurs at positions 79 and 82. Pro-82 carries O-linked (Ara...) hydroxyproline glycosylation.

This sequence belongs to the CLV3/ESR signal peptide family. Post-translationally, the O-glycosylation (arabinosylation) of the hydroxyproline Pro-82 enhances binding affinity of the CLE42p peptide for its receptor. Expressed at low levels in seedlings, roots and inflorescence.

The protein localises to the secreted. It is found in the extracellular space. Extracellular signal peptide that regulates cell fate. Represses tracheary element differentiation but promotes the formation of procambial cells. This is CLAVATA3/ESR (CLE)-related protein 42 from Arabidopsis thaliana (Mouse-ear cress).